The following is a 281-amino-acid chain: MPPPLEARDYIGLAASPASSSSSCCASTPVAEVVGAHLALRLGLPGSESPARAEAEAVVVDAALTLGPAPPPRGGAKRGFVDSLDRSEGRRAAATAGDDERGVREEEEEEKGLGEAAAGAPRAAKAQVVGWPPVRSYRKNTLAASATKTKGEDQGKSEVGCCYVKVSMDGAPYLRKVDLKTYSSYEDLSLALEKMFSCFITGRSSSHKTSKRDRLTDGSRADALKDQEYVLTYEDKDADWMLVGDLPWDLFTTSCRKLRIMRGSDAAGMAPRSLEQTGQNK.

The EAR-like (transcriptional repression) signature appears at 40–44; the sequence is LRLGL. A disordered region spans residues 66–126; sequence LGPAPPPRGG…AAGAPRAAKA (61 aa). Residues 79–91 show a composition bias toward basic and acidic residues; it reads GFVDSLDRSEGRR. The span at 114-126 shows a compositional bias: low complexity; the sequence is GEAAAGAPRAAKA. In terms of domain architecture, PB1 spans 161–265; sequence CCYVKVSMDG…RKLRIMRGSD (105 aa).

This sequence belongs to the Aux/IAA family. Homodimers and heterodimers. Expressed in etiolated seedlings and flowers.

It localises to the nucleus. Functionally, aux/IAA proteins are short-lived transcriptional factors that function as repressors of early auxin response genes at low auxin concentrations. In Oryza sativa subsp. japonica (Rice), this protein is Auxin-responsive protein IAA19 (IAA19).